The following is a 3317-amino-acid chain: Cadherin-23 (3317 aa).

Positions Met1–Gly23 are cleaved as a signal peptide. Residues Gln24–Ala3062 lie on the Extracellular side of the membrane. Cadherin domains are found at residues His34 to Phe132, His133 to Phe236, Ile237 to Phe348, Asn349 to Phe458, Ser459 to Phe559, Gln560 to Phe669, Ser670 to Tyr782, Lys777 to Phe888, Gln889 to Phe993, Phe994 to Phe1100, Leu1101 to Phe1206, Gln1208 to Phe1311, Ser1312 to Phe1416, Phe1418 to Ile1525, Ser1527 to Phe1632, Gln1633 to Phe1742, Pro1743 to Leu1849, Leu1850 to Phe1957, Thr1958 to Phe2067, Ser2068 to Phe2172, Leu2173 to Phe2291, Gly2295 to Phe2400, Asp2401 to Phe2507, Ser2508 to Phe2609, Pro2612 to Phe2720, Ser2727 to Phe2844, and Thr2845 to Phe2973. Residues Asn155 and Asn206 are each glycosylated (N-linked (GlcNAc...) asparagine). N-linked (GlcNAc...) asparagine glycans are attached at residues Asn349, Asn391, Asn432, Asn464, Asn470, Asn600, Asn692, Asn763, Asn808, Asn825, Asn939, Asn999, Asn1016, Asn1169, Asn1280, Asn1313, Asn1471, Asn1532, Asn1649, Asn1665, Asn1816, Asn1855, Asn1887, Asn1900, Asn2012, Asn2048, Asn2127, Asn2166, Asn2193, Asn2261, Asn2355, and Asn2367. N-linked (GlcNAc...) asparagine glycosylation is found at Asn2576, Asn2614, Asn2747, Asn2806, Asn2875, Asn2894, Asn2939, and Asn2979. A helical membrane pass occupies residues Leu3063 to Leu3083. Residues Met3084–Leu3317 lie on the Cytoplasmic side of the membrane.

In terms of assembly, antiparallel heterodimer with PCDH15. Interacts with USH1C and USH1G.

It localises to the cell membrane. In terms of biological role, cadherins are calcium-dependent cell adhesion proteins. They preferentially interact with themselves in a homophilic manner in connecting cells. CDH23 is required for establishing and/or maintaining the proper organization of the stereocilia bundle of hair cells in the cochlea and the vestibule during late embryonic/early postnatal development. It is part of the functional network formed by USH1C, USH1G, CDH23 and MYO7A that mediates mechanotransduction in cochlear hair cells. Required for normal hearing. The chain is Cadherin-23 (Cdh23) from Rattus norvegicus (Rat).